The primary structure comprises 317 residues: Olfactory receptor 2F2 (317 aa).

Over 1-25 (MEIDNQTWVREFILLGLSSDWCTQI) the chain is Extracellular. N-linked (GlcNAc...) asparagine glycosylation occurs at N5. Residues 26–49 (SLFSLFLVTYLMTVLGNCLIVLLI) form a helical membrane-spanning segment. Residues 50–57 (RLDSRLHT) lie on the Cytoplasmic side of the membrane. The helical transmembrane segment at 58-79 (PMYFFLTNLSLVDVSYATSVVP) threads the bilayer. Residues 80 to 100 (QLLAHFLAEHKAIPFQSCAAQ) lie on the Extracellular side of the membrane. Residues C97 and C189 are joined by a disulfide bond. A helical membrane pass occupies residues 101–120 (LFFSLALGGIEFVLLAVMAY). At 121–139 (DRHVAVSDRLRYSAIMHGG) the chain is on the cytoplasmic side. The helical transmembrane segment at 140-158 (LCARLAITSWVSGSINSLV) threads the bilayer. Residues 159 to 195 (QTAITFQLPMCTNKFIDHISCELLAVVRLACVDTSSN) lie on the Extracellular side of the membrane. A helical membrane pass occupies residues 196–219 (EAAIMVSSIVLLMTPFCLVLLSYI). Topologically, residues 220–236 (RIISTILKIQSREGRKK) are cytoplasmic. Residues 237–259 (AFHTCASHLTVVALCYGTTIFTY) form a helical membrane-spanning segment. Over 260-272 (IQPHSGPSVLQEK) the chain is Extracellular. A helical transmembrane segment spans residues 273–292 (LISVFYAIVMPLLNPVIYSL). Over 293-317 (RNKEVKGAWHKLLEKFSGLTSKLGT) the chain is Cytoplasmic.

This sequence belongs to the G-protein coupled receptor 1 family.

It localises to the cell membrane. Its function is as follows. Odorant receptor. The sequence is that of Olfactory receptor 2F2 (OR2F2) from Homo sapiens (Human).